The chain runs to 101 residues: DNA-directed RNA polymerase subunit omega (101 aa).

Over residues 1-13 the composition is skewed to low complexity; the sequence is MSSTPAAASATPS. Residues 1–22 form a disordered region; the sequence is MSSTPAAASATPSHGALPAYDT.

Belongs to the RNA polymerase subunit omega family. The RNAP catalytic core consists of 2 alpha, 1 beta, 1 beta' and 1 omega subunit. When a sigma factor is associated with the core the holoenzyme is formed, which can initiate transcription.

It catalyses the reaction RNA(n) + a ribonucleoside 5'-triphosphate = RNA(n+1) + diphosphate. In terms of biological role, promotes RNA polymerase assembly. Latches the N- and C-terminal regions of the beta' subunit thereby facilitating its interaction with the beta and alpha subunits. The polypeptide is DNA-directed RNA polymerase subunit omega (Rhodococcus jostii (strain RHA1)).